The following is a 78-amino-acid chain: MNISNNARIDSNDLAKRGESLIRKSTNRYLTTVKIAFRAKQRRFDDFDGLLEESNIKPVQRSIIELSDEQDQPDLLPG.

It belongs to the RNA polymerase subunit omega family. In cyanobacteria the RNAP catalytic core is composed of 2 alpha, 1 beta, 1 beta', 1 gamma and 1 omega subunit. When a sigma factor is associated with the core the holoenzyme is formed, which can initiate transcription.

It carries out the reaction RNA(n) + a ribonucleoside 5'-triphosphate = RNA(n+1) + diphosphate. Its function is as follows. Promotes RNA polymerase assembly. Latches the N- and C-terminal regions of the beta' subunit thereby facilitating its interaction with the beta and alpha subunits. In Prochlorococcus marinus (strain AS9601), this protein is DNA-directed RNA polymerase subunit omega.